A 344-amino-acid polypeptide reads, in one-letter code: Serine proteinase inhibitor 2 (344 aa).

Belongs to the serpin family. Poxviruses subfamily.

The protein localises to the host cytoplasm. Functionally, viral serpin that inhibits both cysteine and serine proteinases involved in the regulation of host inflammatory and apoptosis processes. Major anti-apoptotic protein which inhibits both intrinsic and extrinsic pathways and strongly cleaves host CASP1 and CASP8 but is a rather poor inhibitor of host CASP3. Prevents the proteolytic activity of host interleukin-1-beta converting enzyme (ICE) and ICE-like enzymes. Can also block apoptosis through host tumor necrosis factor (TNF) receptor. The inhibition of host ICE is an example of a 'cross-class' interaction, in which a serpin inhibits a non-serine proteinase. Also inhibits granzyme B. The polypeptide is Serine proteinase inhibitor 2 (OPG199) (Homo sapiens (Human)).